Reading from the N-terminus, the 237-residue chain is Fluoroquinolones export permease protein MT2761 (237 aa).

A run of 6 helical transmembrane segments spans residues 20 to 40 (FLHA…PMPV), 49 to 69 (YVLV…TVFF), 96 to 116 (VLLA…HGLG), 119 to 139 (LLPL…VGFS), 147 to 167 (VTDW…PPVV), and 199 to 219 (LAPW…AGLC).

As to quaternary structure, the complex is composed of 2 ATP-binding proteins and 2 transmembrane proteins.

It localises to the cell membrane. Part of the ABC transporter complex involved in fluoroquinolones export. Probably responsible for the translocation of the substrate across the membrane. The polypeptide is Fluoroquinolones export permease protein MT2761 (Mycobacterium tuberculosis (strain CDC 1551 / Oshkosh)).